The chain runs to 463 residues: Zinc finger protein PLAGL1 (463 aa).

7 C2H2-type zinc fingers span residues 4–26, 32–56, 62–84, 91–113, 120–142, 156–178, and 184–207; these read YPCQLCGKTFLTLEKFTIHNYSH, YKCLQPDCGKAFISRYKLMRHMATH, HQCAHCEKTFNRKDHLKNHLQTH, FGCEECGKKYNTMLGYKRHLALH, LTCGVCALELGSTEVLLDHLKAH, HQCDHCERCFYTRKDVRRHLVVH, and FLCQFCAQRFGRKDHLTRHTKKTH. Residues 285–310 form a disordered region; that stretch reads LHPVAPPTSPPQPLQNHKYNTSSTSY. The span at 287–297 shows a compositional bias: pro residues; that stretch reads PVAPPTSPPQP. The span at 298–310 shows a compositional bias: polar residues; that stretch reads LQNHKYNTSSTSY.

Belongs to the krueppel C2H2-type zinc-finger protein family. Interacts with THRSP.

The protein localises to the nucleus. Its function is as follows. Acts as a transcriptional activator. Involved in the transcriptional regulation of type 1 receptor for pituitary adenylate cyclase-activating polypeptide. This chain is Zinc finger protein PLAGL1 (PLAGL1), found in Sus scrofa (Pig).